A 261-amino-acid chain; its full sequence is N-acetyltransferase ECO1 (261 aa).

The segment at 29-53 (LKCPKCEMKYSPNSIDDVATHKKYH) adopts a CCHH-type zinc-finger fold. The N-acetyltransferase domain occupies 102-261 (VMIQENKPAE…SGHILIPCYL (160 aa)).

It belongs to the acetyltransferase family. ECO subfamily.

The protein resides in the nucleus. Functionally, probable acetyltransferase required for the establishment of sister chromatid cohesion and couple the processes of cohesion and DNA replication to ensure that only sister chromatids become paired together. In contrast to the structural cohesins, the deposition and establishment factors are required only during S phase. Acts by acetylating the cohesin complex component SMC3. The protein is N-acetyltransferase ECO1 (ECO1) of Candida glabrata (strain ATCC 2001 / BCRC 20586 / JCM 3761 / NBRC 0622 / NRRL Y-65 / CBS 138) (Yeast).